The sequence spans 392 residues: Cell division protein FtsZ (392 aa).

Residues 24–28, 111–113, glutamate 142, arginine 145, and aspartate 189 each bind GTP; these read GGGCN and GTG.

It belongs to the FtsZ family. As to quaternary structure, homodimer. Polymerizes to form a dynamic ring structure in a strictly GTP-dependent manner. Interacts directly with several other division proteins.

It localises to the cytoplasm. Functionally, essential cell division protein that forms a contractile ring structure (Z ring) at the future cell division site. The regulation of the ring assembly controls the timing and the location of cell division. One of the functions of the FtsZ ring is to recruit other cell division proteins to the septum to produce a new cell wall between the dividing cells. Binds GTP and shows GTPase activity. The protein is Cell division protein FtsZ of Neisseria gonorrhoeae.